A 312-amino-acid polypeptide reads, in one-letter code: Zinc-finger homeodomain protein 9 (312 aa).

The disordered stretch occupies residues 1 to 27; that stretch reads MLEVRSMDMTPKSPEPESETPTRIQPA. S13 carries the phosphoserine modification. A ZF-HD dimerization-type; degenerate zinc finger spans residues 52-103; it reads YKECLKNHAAAIGGHALDGCGEFMPSPSSTPSDPTSLKCAACGCHRNFHRRE. 2 disordered regions span residues 128 to 155 and 253 to 312; these read QPHH…PPPI and FSGG…SSSS. A compositionally biased stretch (pro residues) spans 136-155; it reads PPPLAPPLPRSPNSSSPPPI. Positions 192–255 form a DNA-binding region, homeobox; the sequence is RKRFRTKFSS…NNKNSFKFSG (64 aa). S273 is subject to Phosphoserine.

In terms of assembly, homo- and heterodimer with other ZFHD proteins. Interacts with MIF3; this interaction prevents nuclear localization and DNA-binding to inhibit transcription regulation activity. Binds to ZHD1, ZHD2 and ZHD11. Mostly expressed in flowers, stems and inflorescence and, to a lower extent, in leaves and stems.

The protein resides in the nucleus. In terms of biological role, putative transcription factor. In Arabidopsis thaliana (Mouse-ear cress), this protein is Zinc-finger homeodomain protein 9 (ZHD9).